The chain runs to 304 residues: Ribosomal protein L11 methyltransferase (304 aa).

S-adenosyl-L-methionine contacts are provided by threonine 155, glycine 176, aspartate 198, and asparagine 239.

This sequence belongs to the methyltransferase superfamily. PrmA family.

It localises to the cytoplasm. It catalyses the reaction L-lysyl-[protein] + 3 S-adenosyl-L-methionine = N(6),N(6),N(6)-trimethyl-L-lysyl-[protein] + 3 S-adenosyl-L-homocysteine + 3 H(+). Methylates ribosomal protein L11. This is Ribosomal protein L11 methyltransferase from Caldicellulosiruptor bescii (strain ATCC BAA-1888 / DSM 6725 / KCTC 15123 / Z-1320) (Anaerocellum thermophilum).